We begin with the raw amino-acid sequence, 257 residues long: Imidazole glycerol phosphate synthase subunit hisF1 (257 aa).

Residues Asp-11 and Asp-130 contribute to the active site.

Belongs to the HisA/HisF family. In terms of assembly, heterodimer of HisH and HisF.

Its subcellular location is the cytoplasm. The enzyme catalyses 5-[(5-phospho-1-deoxy-D-ribulos-1-ylimino)methylamino]-1-(5-phospho-beta-D-ribosyl)imidazole-4-carboxamide + L-glutamine = D-erythro-1-(imidazol-4-yl)glycerol 3-phosphate + 5-amino-1-(5-phospho-beta-D-ribosyl)imidazole-4-carboxamide + L-glutamate + H(+). It participates in amino-acid biosynthesis; L-histidine biosynthesis; L-histidine from 5-phospho-alpha-D-ribose 1-diphosphate: step 5/9. Functionally, IGPS catalyzes the conversion of PRFAR and glutamine to IGP, AICAR and glutamate. The HisF subunit catalyzes the cyclization activity that produces IGP and AICAR from PRFAR using the ammonia provided by the HisH subunit. This chain is Imidazole glycerol phosphate synthase subunit hisF1 (hisF1), found in Vibrio vulnificus (strain YJ016).